The primary structure comprises 408 residues: Arginine biosynthesis bifunctional protein ArgJ (408 aa).

Residues T156, K182, T193, E279, N403, and T408 each contribute to the substrate site. The active-site Nucleophile is T193.

It belongs to the ArgJ family. As to quaternary structure, heterotetramer of two alpha and two beta chains.

Its subcellular location is the cytoplasm. The catalysed reaction is N(2)-acetyl-L-ornithine + L-glutamate = N-acetyl-L-glutamate + L-ornithine. It carries out the reaction L-glutamate + acetyl-CoA = N-acetyl-L-glutamate + CoA + H(+). It participates in amino-acid biosynthesis; L-arginine biosynthesis; L-ornithine and N-acetyl-L-glutamate from L-glutamate and N(2)-acetyl-L-ornithine (cyclic): step 1/1. Its pathway is amino-acid biosynthesis; L-arginine biosynthesis; N(2)-acetyl-L-ornithine from L-glutamate: step 1/4. Functionally, catalyzes two activities which are involved in the cyclic version of arginine biosynthesis: the synthesis of N-acetylglutamate from glutamate and acetyl-CoA as the acetyl donor, and of ornithine by transacetylation between N(2)-acetylornithine and glutamate. The polypeptide is Arginine biosynthesis bifunctional protein ArgJ (Methylococcus capsulatus (strain ATCC 33009 / NCIMB 11132 / Bath)).